The chain runs to 885 residues: Translation initiation factor IF-2 (885 aa).

Residues 123–232 (ETEAKAKAEA…EAERYSDHHI (110 aa)) are compositionally biased toward basic and acidic residues. Residues 123–289 (ETEAKAKAEA…RNRSTAPESM (167 aa)) form a disordered region. The span at 253–266 (GRRARNKNTAKTKR) shows a compositional bias: basic residues. The span at 267–276 (GGKDARDGRE) shows a compositional bias: basic and acidic residues. Positions 385 to 554 (PRAPVVTIMG…LLQAEVLELK (170 aa)) constitute a tr-type G domain. The tract at residues 394 to 401 (GHVDHGKT) is G1. GTP is bound at residue 394-401 (GHVDHGKT). Residues 419-423 (GITQH) are G2. A G3 region spans residues 440 to 443 (DTPG). Residues 440 to 444 (DTPGH) and 494 to 497 (NKMD) contribute to the GTP site. A G4 region spans residues 494-497 (NKMD). The segment at 530 to 532 (SAK) is G5.

Belongs to the TRAFAC class translation factor GTPase superfamily. Classic translation factor GTPase family. IF-2 subfamily.

It localises to the cytoplasm. Functionally, one of the essential components for the initiation of protein synthesis. Protects formylmethionyl-tRNA from spontaneous hydrolysis and promotes its binding to the 30S ribosomal subunits. Also involved in the hydrolysis of GTP during the formation of the 70S ribosomal complex. In Shewanella oneidensis (strain ATCC 700550 / JCM 31522 / CIP 106686 / LMG 19005 / NCIMB 14063 / MR-1), this protein is Translation initiation factor IF-2.